Consider the following 184-residue polypeptide: Large ribosomal subunit protein uL5 (184 aa).

The protein belongs to the universal ribosomal protein uL5 family. Part of the 50S ribosomal subunit; part of the 5S rRNA/L5/L18/L25 subcomplex. Contacts the 5S rRNA and the P site tRNA. Forms a bridge to the 30S subunit in the 70S ribosome.

This is one of the proteins that bind and probably mediate the attachment of the 5S RNA into the large ribosomal subunit, where it forms part of the central protuberance. In the 70S ribosome it contacts protein S13 of the 30S subunit (bridge B1b), connecting the 2 subunits; this bridge is implicated in subunit movement. Contacts the P site tRNA; the 5S rRNA and some of its associated proteins might help stabilize positioning of ribosome-bound tRNAs. The polypeptide is Large ribosomal subunit protein uL5 (Pelagibacter ubique (strain HTCC1062)).